The following is a 98-amino-acid chain: Large ribosomal subunit protein bL28 (98 aa).

It belongs to the bacterial ribosomal protein bL28 family.

The chain is Large ribosomal subunit protein bL28 from Bartonella bacilliformis (strain ATCC 35685 / KC583 / Herrer 020/F12,63).